The following is a 309-amino-acid chain: Taste receptor type 2 member 8 (309 aa).

At 1-7 the chain is on the extracellular side; that stretch reads MFSPADN. Residues 8-28 traverse the membrane as a helical segment; the sequence is IFIILITGEFILGILGNGYIA. The Cytoplasmic segment spans residues 29–50; sequence LVNWIDWIKKKKISTIDYILTN. A helical transmembrane segment spans residues 51–71; it reads LVISRICLISVMVVNGIVIAV. Topologically, residues 72-82 are extracellular; the sequence is YPDVYTKSKLQ. A helical transmembrane segment spans residues 83 to 103; sequence IAICTFWTFANYLNMWITTCL. Residues 104-131 lie on the Cytoplasmic side of the membrane; it reads NVFYFLKIANSSHPLFLWLKQKIDMVVR. The helical transmembrane segment at 132 to 152 threads the bilayer; it reads WILLGCFAISLLVSLIAAIVL. Residues 153 to 184 are Extracellular-facing; that stretch reads SYDYRFHAIAKHKRNITEMFHVSKRPYFEPLT. N-linked (GlcNAc...) asparagine glycosylation is present at asparagine 167. The chain crosses the membrane as a helical span at residues 185 to 205; that stretch reads LFNLFAIVPFIVSLISFFLLV. Residues 206-239 are Cytoplasmic-facing; sequence RSLWRHTKQIKLYATGGRDPSTEVHVRAIKTMTS. The helical transmembrane segment at 240-260 threads the bilayer; sequence FIFLFFLYYISSILVTFSYLM. Topologically, residues 261 to 266 are extracellular; it reads TKYKLA. A helical membrane pass occupies residues 267–287; it reads VEFGEIVAILYPLGHSLILIV. Over 288-309 the chain is Cytoplasmic; that stretch reads LNNKLRQTFVRMLTCRKIACVI.

This sequence belongs to the G-protein coupled receptor T2R family.

The protein resides in the membrane. Its function is as follows. Receptor that may play a role in the perception of bitterness and is gustducin-linked. May play a role in sensing the chemical composition of the gastrointestinal content. The activity of this receptor may stimulate alpha gustducin, mediate PLC-beta-2 activation and lead to the gating of TRPM5. This is Taste receptor type 2 member 8 (TAS2R8) from Gorilla gorilla gorilla (Western lowland gorilla).